The primary structure comprises 428 residues: 3-phosphoshikimate 1-carboxyvinyltransferase (428 aa).

3-phosphoshikimate is bound by residues Lys21, Ser22, and Arg26. Lys21 is a binding site for phosphoenolpyruvate. The phosphoenolpyruvate site is built by Gly91 and Arg119. 3-phosphoshikimate-binding residues include Ser164, Gln166, Asp311, and Lys338. Gln166 provides a ligand contact to phosphoenolpyruvate. Asp311 acts as the Proton acceptor in catalysis. Phosphoenolpyruvate contacts are provided by Arg342 and Arg383.

This sequence belongs to the EPSP synthase family. As to quaternary structure, monomer.

The protein localises to the cytoplasm. The enzyme catalyses 3-phosphoshikimate + phosphoenolpyruvate = 5-O-(1-carboxyvinyl)-3-phosphoshikimate + phosphate. It participates in metabolic intermediate biosynthesis; chorismate biosynthesis; chorismate from D-erythrose 4-phosphate and phosphoenolpyruvate: step 6/7. Its function is as follows. Catalyzes the transfer of the enolpyruvyl moiety of phosphoenolpyruvate (PEP) to the 5-hydroxyl of shikimate-3-phosphate (S3P) to produce enolpyruvyl shikimate-3-phosphate and inorganic phosphate. The chain is 3-phosphoshikimate 1-carboxyvinyltransferase from Campylobacter concisus (strain 13826).